A 439-amino-acid polypeptide reads, in one-letter code: Rhodopsin (439 aa).

An N-linked (GlcNAc...) asparagine glycan is attached at N1. The Extracellular segment spans residues 1-26 (NETWWYNPYMDIHSHWKQFDQVPAAV). Residues 27–51 (YYSLGIFIAICGIIGCAGNGIVIYL) traverse the membrane as a helical segment. At 52-63 (FTKTKSLQTPAN) the chain is on the cytoplasmic side. Residues 64 to 90 (MFIINLAFSDFTFSLVNGFPMMTISCF) traverse the membrane as a helical segment. Over 91-102 (LKHWVFGQAACK) the chain is Extracellular. C101 and C179 are oxidised to a cystine. A helical membrane pass occupies residues 103-124 (VYGLIGGIFGLTSIMTMTMISI). A 'Ionic lock' involved in activated form stabilization motif is present at residues 125 to 127 (DRY). The Cytoplasmic portion of the chain corresponds to 125 to 144 (DRYNVIRRPMSASKKMSHRK). A helical membrane pass occupies residues 145-165 (AFIMIVFVWIWSTIWAIGPIF). Topologically, residues 166-192 (GWGAYQLEGVLCNCSFDYITRDASTRS) are extracellular. Residues 193–217 (NIVCMYIFAFMFPIVVIFFCYFNIV) form a helical membrane-spanning segment. Residues 218–254 (MSVSNHEKEMAAMAKRLNAKELRKAQAGASAEMKLAK) lie on the Cytoplasmic side of the membrane. A helical membrane pass occupies residues 255-276 (ISIVIVTQSLLSWSPYAIVALL). The Extracellular portion of the chain corresponds to 277-286 (AQFGPIEWVT). Residues 287–308 (PYAAQLPVMFAKASAIHNPMIY) form a helical membrane-spanning segment. K298 carries the N6-(retinylidene)lysine modification. Residues 309–439 (SVSHPKFREA…PQAAPPQGVD (131 aa)) are Cytoplasmic-facing. 2 S-palmitoyl cysteine lipidation sites follow: C329 and C330. The segment covering 369 to 381 (MMQKMQAQQQQQP) has biased composition (low complexity). Residues 369 to 439 (MMQKMQAQQQ…PQAAPPQGVD (71 aa)) form a disordered region. The span at 382–433 (AYPPQGYPPQGYPPPPPQGYPPQGYPPQGYPPQGYPPPPQGPPPQGPPPQAA) shows a compositional bias: pro residues.

It belongs to the G-protein coupled receptor 1 family. Opsin subfamily. Contains one covalently linked retinal chromophore. Upon light absorption, the covalently bound 11-cis-retinal is converted to all-trans-retinal. After hydrolysis of the Schiff base and release of the covalently bound all-trans-retinal, active rhodopsin is regenerated by binding of a fresh molecule of 11-cis-retinal.

It localises to the cell projection. The protein resides in the rhabdomere membrane. Photoreceptor required for image-forming vision at low light intensity. Light-induced isomerization of 11-cis to all-trans retinal triggers a conformational change that activates signaling via G-proteins. Signaling mediates the activation of phospholipase C. Subsequent receptor phosphorylation mediates displacement of the bound G-protein alpha subunit by arrestin and terminates signaling. In Alloteuthis subulata (Squid), this protein is Rhodopsin (RHO).